A 92-amino-acid polypeptide reads, in one-letter code: UPF0125 protein NMA1005 (92 aa).

This sequence belongs to the UPF0125 (RnfH) family.

This Neisseria meningitidis serogroup A / serotype 4A (strain DSM 15465 / Z2491) protein is UPF0125 protein NMA1005.